A 264-amino-acid chain; its full sequence is Small ribosomal subunit protein uS2 (264 aa).

Residues 233–264 (AQTQAGGKAEQEAPATEEAADAQTEEAATPAE) form a disordered region.

This sequence belongs to the universal ribosomal protein uS2 family.

In Psychrobacter arcticus (strain DSM 17307 / VKM B-2377 / 273-4), this protein is Small ribosomal subunit protein uS2.